Here is a 133-residue protein sequence, read N- to C-terminus: Small ribosomal subunit protein uS8 (133 aa).

It belongs to the universal ribosomal protein uS8 family. In terms of assembly, part of the 30S ribosomal subunit.

Its function is as follows. One of the primary rRNA binding proteins, it binds directly to 16S rRNA central domain where it helps coordinate assembly of the platform of the 30S subunit. The sequence is that of Small ribosomal subunit protein uS8 from Saccharolobus islandicus (strain L.S.2.15 / Lassen #1) (Sulfolobus islandicus).